A 350-amino-acid polypeptide reads, in one-letter code: uncharacterized protein (350 aa).

The Mn(2+) site is built by Asp-214, Asp-225, His-289, Glu-318, and Glu-332.

The protein belongs to the peptidase M24B family. It depends on Mn(2+) as a cofactor.

This is an uncharacterized protein from Staphylococcus saprophyticus subsp. saprophyticus (strain ATCC 15305 / DSM 20229 / NCIMB 8711 / NCTC 7292 / S-41).